The chain runs to 211 residues: Interleukin-6 (211 aa).

Residues 1–24 (MKFLSARDFHPVAFLGLMLVTTTA) form the signal peptide. 2 cysteine pairs are disulfide-bonded: Cys70/Cys76 and Cys99/Cys109.

This sequence belongs to the IL-6 superfamily. Component of a hexamer of two molecules each of IL6, IL6R and IL6ST; first binds to IL6R to associate with the signaling subunit IL6ST. Interacts with IL6R (via the N-terminal ectodomain); this interaction may be affected by IL6R-binding with SORL1, hence decreasing IL6 cis signaling. Interacts with SORL1 (via the N-terminal ectodomain); this interaction leads to IL6 internalization and lysosomal degradation. May form a trimeric complex with the soluble SORL1 ectodomain and soluble IL6R receptor; this interaction might stabilize circulating IL6, hence promoting IL6 trans signaling. Post-translationally, N- and O-glycosylated. As to expression, expressed by dendritic cells and macrophages. Expressed by activated follicular B cells. Abundantly expressed in the central nervous system (CNS), particularly the hypothalamic region.

The protein localises to the secreted. Cytokine with a wide variety of biological functions in immunity, tissue regeneration, and metabolism. Binds to IL6R, then the complex associates to the signaling subunit IL6ST/gp130 to trigger the intracellular IL6-signaling pathway. The interaction with the membrane-bound IL6R and IL6ST stimulates 'classic signaling', whereas the binding of IL6 and soluble IL6R to IL6ST stimulates 'trans-signaling'. Alternatively, 'cluster signaling' occurs when membrane-bound IL6:IL6R complexes on transmitter cells activate IL6ST receptors on neighboring receiver cells. Functionally, IL6 is a potent inducer of the acute phase response. Rapid production of IL6 contributes to host defense during infection and tissue injury, but excessive IL6 synthesis is involved in disease pathology. In the innate immune response, is synthesized by myeloid cells, such as macrophages and dendritic cells, upon recognition of pathogens through toll-like receptors (TLRs) at the site of infection or tissue injury. In the adaptive immune response, is required for the differentiation of B-cells into immunoglolin-secreting cells. Plays a major role in the differentiation of CD4(+) T cell subsets. Essential factor for the development of T follicular helper (Tfh) cells that are required for the induction of germinal-center formation. Together with IL21, controls the early generation of Tfh cells and are critical for an effective antibody response to acute viral infection. Required to drive naive CD4(+) T cells to the Th17 lineage, through 'cluster signaling' by dendritic cells. Also required for proliferation of myeloma cells and the survival of plasmablast cells. Its function is as follows. Acts as an essential factor in bone homeostasis and on vessels directly or indirectly by induction of VEGF, resulting in increased angiogenesis activity and vascular permeability. Induces, through 'trans-signaling' and synergistically with IL1B and TNF, the production of VEGF. Involved in metabolic controls, is discharged into the bloodstream after muscle contraction increasing lipolysis and improving insulin resistance. 'Trans-signaling' in central nervous system regulates energy and glucose homeostasis. Mediates, through GLP-1, crosstalk between insulin-sensitive tissues, intestinal L cells and pancreatic islets to adapt to changes in insulin demand. Also acts as a myokine. Plays a protective role during liver injury, being required for maintenance of tissue regeneration. Also has a pivotal role in iron metabolism by regulating HAMP/hepcidin expression upon inflammation or bacterial infection. Through activation of IL6ST-YAP-NOTCH pathway, induces inflammation-induced epithelial regeneration. The chain is Interleukin-6 from Mus musculus (Mouse).